The primary structure comprises 394 residues: Penicillopepsin-3 (394 aa).

Residues 1–20 (MVSFTQLQLAFLGLSALGAA) form the signal peptide. The propeptide at 21–70 (VPVTGTSEKKTFSLNQVKVAGTKTKNPAEHYANALRKYGAEVPSHVLAAA) is activation peptide. The Peptidase A1 domain occupies 87–392 (YLTPIDVGGT…DASGPRLGFA (306 aa)). Active-site residues include Asp-103 and Asp-284. An intrachain disulfide couples Cys-320 to Cys-355.

The protein belongs to the peptidase A1 family. In terms of assembly, monomer.

The protein resides in the secreted. It catalyses the reaction Hydrolysis of proteins with broad specificity similar to that of pepsin A, preferring hydrophobic residues at P1 and P1', but also cleaving 20-Gly-|-Glu-21 in the B chain of insulin. Clots milk, and activates trypsinogen.. Its function is as follows. Secreted aspartic endopeptidase that allows assimilation of proteinaceous substrates. The scissile peptide bond is attacked by a nucleophilic water molecule activated by two aspartic residues in the active site. Shows a broad primary substrate specificity. Favors hydrophobic residues at the P1 and P1' positions, but can also activate trypsinogen and hydrolyze the B chain of insulin between positions 'Gly-20' and 'Glu-21'. In Penicillium janthinellum (Penicillium vitale), this protein is Penicillopepsin-3.